A 122-amino-acid polypeptide reads, in one-letter code: Venom protein 7.1 (122 aa).

A signal peptide spans M1–A19.

In terms of processing, contains 3 disulfide bonds. Expressed by the venom gland.

Its subcellular location is the secreted. This chain is Venom protein 7.1, found in Lychas mucronatus (Chinese swimming scorpion).